The following is a 209-amino-acid chain: Protein-L-isoaspartate O-methyltransferase (209 aa).

Ser55 is an active-site residue.

Belongs to the methyltransferase superfamily. L-isoaspartyl/D-aspartyl protein methyltransferase family.

Its subcellular location is the cytoplasm. It carries out the reaction [protein]-L-isoaspartate + S-adenosyl-L-methionine = [protein]-L-isoaspartate alpha-methyl ester + S-adenosyl-L-homocysteine. Catalyzes the methyl esterification of L-isoaspartyl residues in peptides and proteins that result from spontaneous decomposition of normal L-aspartyl and L-asparaginyl residues. It plays a role in the repair and/or degradation of damaged proteins. The polypeptide is Protein-L-isoaspartate O-methyltransferase (Anaeromyxobacter dehalogenans (strain 2CP-C)).